A 496-amino-acid polypeptide reads, in one-letter code: MSAEGEWSCDANDAVQITIVHPDQQKPKTLSSFHPQFTYPIFGEEERIFGYKGLIIRLRFAAHNLRPHVHVSYDEKFTAVDDAEPVDIIGALKEFLPEEAFSSLPEFESAVQEEDAKEFVPPGKLSHSYSIRGRNYEIWAASLADPQVQLLLNRFQIMVSFYIEAGTPLSTDDPEWTLDRWTVYFVLTAARYEKVEPPTPTASSYSIVGYATTYRWWFYKRDRSENPMPRDGPFPPPELVRPGELPSRLRIAQFLILPPHQGTGHGVNLYNTIHKTCLDDPTIMELTVEDPNESFDVLRDSADYHILRPEFLKHNIQINPDPWSDFSKKTKRVPTSSLLPLKTLNEIRTAYKIEPTQFAHIQEMFLLGQIPLKNRRKGGANMARLLVKKYRDDDPNNRRYYWWRMLTKQRLYKRSRDVLIQLKMSERHKALEDTVTNVEDGYEQLFGFFNEREERLRAQQEEAETSNNRDQRTKRKFTVEDEDDEDESAAAKRPKA.

2 interaction with histone H4 N-terminus regions span residues 44–46 (EEE) and 214–216 (YRW). Residues 254 to 256 (FLI) and 261 to 267 (QGTGHGV) contribute to the acetyl-CoA site. Residue Glu289 is the Proton donor/acceptor of the active site. Residues 456–496 (LRAQQEEAETSNNRDQRTKRKFTVEDEDDEDESAAAKRPKA) form a disordered region.

The protein belongs to the HAT1 family. Component of the HAT-B complex composed of at least hat1 and hat2. The HAT-B complex binds to histone H4 tail.

Its subcellular location is the cytoplasm. It localises to the nucleus. The enzyme catalyses L-lysyl-[protein] + acetyl-CoA = N(6)-acetyl-L-lysyl-[protein] + CoA + H(+). In terms of biological role, catalytic component of the histone acetylase B (HAT-B) complex. Acetylates 'Lys-12' of histone H4 which is required for telomeric silencing. Has intrinsic substrate specificity that modifies lysine in recognition sequence GXGKXG. Involved in DNA double-strand break repair. This is Histone acetyltransferase type B catalytic subunit (hat1) from Emericella nidulans (strain FGSC A4 / ATCC 38163 / CBS 112.46 / NRRL 194 / M139) (Aspergillus nidulans).